A 392-amino-acid polypeptide reads, in one-letter code: S-adenosylmethionine synthase (392 aa).

H20 contacts ATP. D22 is a Mg(2+) binding site. K(+) is bound at residue E48. Positions 61 and 106 each coordinate L-methionine. The interval 106–116 (QSRDIINAIEK) is flexible loop. Residues 171-173 (DSK), D248, 254-255 (RK), A271, and K275 each bind ATP. D248 contacts L-methionine. K279 contributes to the L-methionine binding site.

This sequence belongs to the AdoMet synthase family. In terms of assembly, homotetramer; dimer of dimers. The cofactor is Mg(2+). K(+) serves as cofactor.

The protein resides in the cytoplasm. It carries out the reaction L-methionine + ATP + H2O = S-adenosyl-L-methionine + phosphate + diphosphate. Its pathway is amino-acid biosynthesis; S-adenosyl-L-methionine biosynthesis; S-adenosyl-L-methionine from L-methionine: step 1/1. In terms of biological role, catalyzes the formation of S-adenosylmethionine (AdoMet) from methionine and ATP. The overall synthetic reaction is composed of two sequential steps, AdoMet formation and the subsequent tripolyphosphate hydrolysis which occurs prior to release of AdoMet from the enzyme. The polypeptide is S-adenosylmethionine synthase (Borreliella burgdorferi (strain ATCC 35210 / DSM 4680 / CIP 102532 / B31) (Borrelia burgdorferi)).